Here is a 717-residue protein sequence, read N- to C-terminus: MEPLHAGAAGSSRAVCSQGPPTQISSSRVIVHVDLDCFYAQVEMISNPELKDRPLGVQQKYLVVTCNYEARKLGVRKLMNVRDAKEKCPQLVLVNGEDLSRYREMSYKVTELLEEFSPAVERLGFDENFVDLTEMVEKRLQQLPSEEVPSVTVFGHVYNNQSVNLHNIMHRRLVVGSQIAAEMREAMYNQLGLTGCAGVAPNKLLAKLVSGVFKPNQQTVLLPESCQHLIHSLNHIKEIPGIGYKTAKRLEVLGINSVHDLQTFPIKTLEKELGIAIAQRIQQLSFGEDKSPVTPSGPPQSFSEEDTFKKCSSEVEAKAKIEELLSSLLTRVCQDGRKPHTVRLVIRRYSDKHCNRESRQCPIPSHVIQKLGTGNHDSMPPLIDILMKLFRNMVNVKMPFHLTLMSVCFCNLKALSSAKKGPMDCYLTSLSTPAYTDKRAFKVKDTHTEDSHKEKEANWDCLPSRRIESTGTGESPLDATCFPKEKDTSDLPLQALPEGVDQEVFKQLPADIQEEILYGKSRENLKGKGSLSCPLHASRGVLSFFSTKQMQASRLSPRDTALPSKRVSAASPCEPGTSGLSPGSTSHPSCGKDCSYYIDSQLKDEQTSQGPTESQGCQFSSTNPAVSGFHSFPNLQTEQLFSTHRTVDSHKQTATASHQGLESHQGLESRELDSAEEKLPFPPDIDPQVFYELPEEVQKELMAEWERAGAARPSAHR.

The interval 1–22 (MEPLHAGAAGSSRAVCSQGPPT) is disordered. In terms of domain architecture, UmuC spans 30–243 (IVHVDLDCFY…NHIKEIPGIG (214 aa)). Mg(2+)-binding residues include aspartate 34 and leucine 35. The a 2'-deoxyribonucleoside 5'-triphosphate site is built by tyrosine 39 and arginine 71. Aspartate 126 lines the Mg(2+) pocket. Glutamate 127 acts as the Proton acceptor in catalysis. DNA-binding stretches follow at residues 300–307 (QSFSEEDT) and 343–360 (RLVIRRYSDKHCNRESRQ). The Ubiquitin-binding 1 (UBM1) motif lies at 500-517 (VDQEVFKQLPADIQEEIL). Disordered stretches follow at residues 549-589 (QMQA…SHPS), 603-622 (KDEQTSQGPTESQGCQFSST), and 644-687 (HRTV…DIDP). Positions 575 to 589 (PGTSGLSPGSTSHPS) are enriched in low complexity. Composition is skewed to polar residues over residues 607–622 (TSQGPTESQGCQFSST) and 652–662 (QTATASHQGLE). Basic and acidic residues predominate over residues 665–679 (QGLESRELDSAEEKL). The Ubiquitin-binding 2 (UBM2) signature appears at 685 to 702 (IDPQVFYELPEEVQKELM).

It belongs to the DNA polymerase type-Y family. Interacts with POLH. Interacts with REV1. Interacts with ubiquitin. The cofactor is Mg(2+). It depends on Mn(2+) as a cofactor. In terms of processing, monoubiquitinated. Protein monoubiquitination prevents POLI binding to ubiquitin via the ubiquitin-binding motif 1 and ubiquitin-binding motif 2. Detected in testis, and at very low levels in spleen, lung and brain. Detected in round spermatids, but not in prophase spermatocytes.

Its subcellular location is the nucleus. The catalysed reaction is DNA(n) + a 2'-deoxyribonucleoside 5'-triphosphate = DNA(n+1) + diphosphate. Error-prone DNA polymerase specifically involved in DNA repair. Plays an important role in translesion synthesis, where the normal high-fidelity DNA polymerases cannot proceed and DNA synthesis stalls. Favors Hoogsteen base-pairing in the active site. Inserts the correct base with high-fidelity opposite an adenosine template. Exhibits low fidelity and efficiency opposite a thymidine template, where it will preferentially insert guanosine. May play a role in hypermutation of immunoglobulin genes. Forms a Schiff base with 5'-deoxyribose phosphate at abasic sites, but may not have lyase activity. This Mus musculus (Mouse) protein is DNA polymerase iota (Poli).